We begin with the raw amino-acid sequence, 800 residues long: Endoglucanase (800 aa).

Residues 1–30 (MMLRKKTKQLISSILILVLLLSLFPTALAA) form the signal peptide. E190 functions as the Proton donor in the catalytic mechanism. Residue E305 is the Nucleophile of the active site. The tract at residues 761–800 (AATTEPVEPEPVDPGEETPPVDEKEAKTEQKEAEKEEKEE) is disordered. Over residues 767 to 780 (VEPEPVDPGEETPP) the composition is skewed to acidic residues. A compositionally biased stretch (basic and acidic residues) spans 781–800 (VDEKEAKTEQKEAEKEEKEE).

The protein belongs to the glycosyl hydrolase 5 (cellulase A) family.

The enzyme catalyses Endohydrolysis of (1-&gt;4)-beta-D-glucosidic linkages in cellulose, lichenin and cereal beta-D-glucans.. The chain is Endoglucanase from Halalkalibacter akibai (strain ATCC 43226 / DSM 21942 / CIP 109018 / JCM 9157 / 1139) (Bacillus akibai).